We begin with the raw amino-acid sequence, 350 residues long: MSTVQTVLGSITPNLLGRTLTHEHVALDFEHFYRPPPPDFESELKAKISMSTLGYVRLYPYSSKENVRFYDEEALEAAKKDILLYKKHGGGSIVENSSYGLKRNLEIIVELAKSTGVHFIAGTGHYIHAMQDARNASLTVEQLSDLYSKDIITGLEVNGKMVKCGFIGEVASVYPIHDFEKHCIKAAGEIQEVLGCGVSMHPHRVTKAPFEIMRLYLEAGGRADKCVMSHLDRTIFDVDELLEFAKLGCYIQYDLFGTECSFYQLNTSVDMISDGQRIDNLMKLINEGLVDKLLMSHDIHTKHRLTSYGGHGYHHIYTNILPRMFARGVTVEQVEQMTVTNPANWLAFNP.

A divalent metal cation-binding residues include His22, His24, Glu169, His201, His230, and Asp298.

This sequence belongs to the metallo-dependent hydrolases superfamily. Phosphotriesterase family. It depends on a divalent metal cation as a cofactor.

This Drosophila ananassae (Fruit fly) protein is Phosphotriesterase-related protein.